Reading from the N-terminus, the 588-residue chain is A-type ATP synthase subunit A (588 aa).

237–244 is an ATP binding site; the sequence is GPFGSGKT.

The protein belongs to the ATPase alpha/beta chains family. As to quaternary structure, has multiple subunits with at least A(3), B(3), C, D, E, F, H, I and proteolipid K(x).

The protein localises to the cell membrane. It catalyses the reaction ATP + H2O + 4 H(+)(in) = ADP + phosphate + 5 H(+)(out). In terms of biological role, component of the A-type ATP synthase that produces ATP from ADP in the presence of a proton gradient across the membrane. The A chain is the catalytic subunit. This Methanoregula boonei (strain DSM 21154 / JCM 14090 / 6A8) protein is A-type ATP synthase subunit A.